Here is a 370-residue protein sequence, read N- to C-terminus: Death-associated protein kinase 2 (370 aa).

Residues 23 to 285 (YDIGEELGSG…IQEALRHPWI (263 aa)) form the Protein kinase domain. ATP is bound by residues 29 to 37 (LGSGQFAIV) and lysine 52. Catalysis depends on aspartate 149, which acts as the Proton acceptor. Residues 277–344 (QEALRHPWIT…KVHLRPDEDL (68 aa)) are calmodulin-binding. Positions 292 to 301 (QAMVRRESVV) are autoinhibitory domain. At serine 299 the chain carries Phosphoserine. Serine 318 carries the post-translational modification Phosphoserine; by autocatalysis. The interval 348–370 (ESDTEEDIARRKALHPRRRSSTS) is disordered. Serine 349 is subject to Phosphoserine. Residues 358-370 (RKALHPRRRSSTS) are compositionally biased toward basic residues. At threonine 369 the chain carries Phosphothreonine; by PKB/AKT1.

This sequence belongs to the protein kinase superfamily. CAMK Ser/Thr protein kinase family. DAP kinase subfamily. In terms of assembly, homodimer in its autoinhibited state. Active as monomer. Isoform 2 but not isoform 1 can interact with ATF4. Interacts with 14-3-3 proteins YWHAB, YWHAE, YWHAG, YWHAH, YWHAQ, YWHAZ and SFN; the interaction requires DAPK2 phosphorylation at Thr-369 and suppresses DAPK2 kinase activity and DAPK2-induced apoptosis. Mg(2+) is required as a cofactor. In terms of processing, autophosphorylation at Ser-318 inhibits its catalytic activity. Dephosphorylated at Ser-318 in response to activated Fas and TNF-alpha receptors. Expressed in neutrophils and eosinophils. Isoform 2 is expressed in embryonic stem cells (at protein level). Isoform 1 is ubiquitously expressed in all tissue types examined with high levels in heart, lung and skeletal muscle.

Its subcellular location is the cytoplasm. It localises to the cytoplasmic vesicle. It is found in the autophagosome lumen. It catalyses the reaction L-seryl-[protein] + ATP = O-phospho-L-seryl-[protein] + ADP + H(+). The catalysed reaction is L-threonyl-[protein] + ATP = O-phospho-L-threonyl-[protein] + ADP + H(+). With respect to regulation, activated by Ca(2+)/calmodulin. Regulated by a double locking mechanism, involving autophosphorylation at Ser-318, calmodulin binding, and dimerization. In the inactive state, Ser-318 is phosphorylated, and the kinase is dimeric. Activation involves: dephosphorylation at Ser-318, release-of-autoinhibition mechanism where calmodulin binding induces a conformational change that relieves the steric block of the active site by the autoinhibitory domain, and generation of the monomeric active form of the kinase. In terms of biological role, calcium/calmodulin-dependent serine/threonine kinase involved in multiple cellular signaling pathways that trigger cell survival, apoptosis, and autophagy. Regulates both type I apoptotic and type II autophagic cell death signals, depending on the cellular setting. The former is caspase-dependent, while the latter is caspase-independent and is characterized by the accumulation of autophagic vesicles. Acts as a mediator of anoikis and a suppressor of beta-catenin-dependent anchorage-independent growth of malignant epithelial cells. May play a role in granulocytic maturation. Regulates granulocytic motility by controlling cell spreading and polarization. Functionally, isoform 2 is not regulated by calmodulin. It can phosphorylate MYL9. It can induce membrane blebbing and autophagic cell death. This chain is Death-associated protein kinase 2 (DAPK2), found in Homo sapiens (Human).